We begin with the raw amino-acid sequence, 236 residues long: Small ribosomal subunit protein uS2c (236 aa).

It belongs to the universal ribosomal protein uS2 family.

The protein localises to the plastid. Its subcellular location is the chloroplast. In Zea mays (Maize), this protein is Small ribosomal subunit protein uS2c (rps2).